Consider the following 367-residue polypeptide: B2 bradykinin receptor (367 aa).

Over 1-36 (MLNLTSQVPEPALNGTLPQSSSCFHSDWWNWLNTIQ) the chain is Extracellular. N3 and N14 each carry an N-linked (GlcNAc...) asparagine glycan. Residues 37–60 (APFLWVLFLLAALENIFVLSVFCL) form a helical membrane-spanning segment. Topologically, residues 61–69 (HKNSCTVAE) are cytoplasmic. The chain crosses the membrane as a helical span at residues 70–94 (IYLGNLAMADLILALGLPFWAITIA). The Extracellular segment spans residues 95-107 (NHFDWLFGEVLCR). A disulfide bridge connects residues C106 and C187. Residues 108–129 (VVNTMIYMNLYSSICFLMLVSI) traverse the membrane as a helical segment. The Cytoplasmic segment spans residues 130–151 (DRYLALVKTMSMGRMRGVRWAK). Residue Y132 is modified to Phosphotyrosine. The chain crosses the membrane as a helical span at residues 152 to 174 (LYSLVIWGCTLLLSSPMLAFRTM). Topologically, residues 175–197 (HEYAAEGHNVTACIIKYPSRSWM) are extracellular. The N-linked (GlcNAc...) asparagine glycan is linked to N183. A helical membrane pass occupies residues 198–224 (VFTNILLNSVGFLLPLSIITYCTVQIL). Topologically, residues 225 to 243 (QVLRNNEMQKFKEIQTERK) are cytoplasmic. The helical transmembrane segment at 244-268 (ATVLVLAVLLLFVVCWLPFQISTFL) threads the bilayer. Residues 269 to 287 (DTLLRLGVLSGCWDEHAVD) lie on the Extracellular side of the membrane. Residues 288–311 (VITQISSYVAYSNSGLNPLVYVIV) form a helical membrane-spanning segment. Residues 312 to 367 (GKRFRKKSREVYRVLCQKGGCMGEPVQMENSMGTLRTSISVERQIHKLQDWAGKKQ) are Cytoplasmic-facing. Y323 is modified (phosphotyrosine). C327 is lipidated: S-palmitoyl cysteine. S342 is subject to Phosphoserine. A Phosphothreonine modification is found at T345. Residues S349 and S351 each carry the phosphoserine; by GRK6 modification.

The protein belongs to the G-protein coupled receptor 1 family. Bradykinin receptor subfamily. BDKRB2 sub-subfamily. In terms of assembly, forms a complex with PECAM1 and GNAQ. Interacts with PECAM1.

The protein localises to the cell membrane. Its function is as follows. Receptor for bradykinin. It is associated with G proteins that activate a phosphatidylinositol-calcium second messenger system. The protein is B2 bradykinin receptor (BDKRB2) of Sus scrofa (Pig).